The primary structure comprises 530 residues: Chaperonin GroEL 2 (530 aa).

ATP-binding positions include 30–33 (TLGP), Lys-51, 87–91 (DGTTT), Gly-415, 479–481 (NAA), and Asp-495.

This sequence belongs to the chaperonin (HSP60) family. In terms of assembly, forms a cylinder of 14 subunits composed of two heptameric rings stacked back-to-back. Interacts with the co-chaperonin GroES.

It is found in the cytoplasm. The catalysed reaction is ATP + H2O + a folded polypeptide = ADP + phosphate + an unfolded polypeptide.. In terms of biological role, together with its co-chaperonin GroES, plays an essential role in assisting protein folding. The GroEL-GroES system forms a nano-cage that allows encapsulation of the non-native substrate proteins and provides a physical environment optimized to promote and accelerate protein folding. The polypeptide is Chaperonin GroEL 2 (Vibrio cholerae serotype O1 (strain ATCC 39315 / El Tor Inaba N16961)).